The following is a 218-amino-acid chain: Peroxiredoxin-like 2A (218 aa).

The tract at residues 3 to 101 (MWSIGAGAIG…DELGVPLYAV (99 aa)) is thioredoxin fold. Catalysis depends on redox-active residues Cys-74 and Cys-77.

Belongs to the peroxiredoxin-like PRXL2 family. PRXL2A subfamily.

The protein resides in the cytoplasm. Its subcellular location is the secreted. Functionally, involved in redox regulation of the cell. Acts as an antioxidant. Inhibits TNFSF11-induced NFKB1 and JUN activation and osteoclast differentiation. May affect bone resorption and help to maintain bone mass. Acts as a negative regulator of macrophage-mediated inflammation by inhibiting macrophage production of inflammatory cytokines, probably through suppression of the MAPK signaling pathway. The protein is Peroxiredoxin-like 2A (PRXL2A) of Bos taurus (Bovine).